The sequence spans 109 residues: Phycoerythrin alpha-1 subunit (109 aa).

Residues Val6, Ala16, Phe17, Pro20, Asp27, Ala28, and Ala39 each coordinate (2R,3E)-phycocyanobilin.

Belongs to the phycoerythrin family. Heterotetramer of 2 identical alpha chains and 2 identical beta chains which form 2 alpha-beta heterodimers within the heterotetramer. The two alpha-beta heterodimers are rotated to an open configuration in contrast to the closed configuration found in other cryptophyte species due to the insertion of a single amino acid, Asp-65, in a conserved region of the alpha chain. In the open form, the central chromophores are not in physical contact but are separated by a water-filled channel. In terms of processing, contains three phycocyanobilin chromophores with binding mediated by both the alpha and beta subunits.

It is found in the plastid. It localises to the chloroplast thylakoid membrane. Its function is as follows. Light-harvesting photosynthetic tetrapyrrole chromophore-protein from the phycobiliprotein complex. This is Phycoerythrin alpha-1 subunit from Hemiselmis virescens.